We begin with the raw amino-acid sequence, 262 residues long: Indole-3-glycerol phosphate synthase (262 aa).

It belongs to the TrpC family.

The enzyme catalyses 1-(2-carboxyphenylamino)-1-deoxy-D-ribulose 5-phosphate + H(+) = (1S,2R)-1-C-(indol-3-yl)glycerol 3-phosphate + CO2 + H2O. It participates in amino-acid biosynthesis; L-tryptophan biosynthesis; L-tryptophan from chorismate: step 4/5. The protein is Indole-3-glycerol phosphate synthase of Leuconostoc mesenteroides subsp. mesenteroides (strain ATCC 8293 / DSM 20343 / BCRC 11652 / CCM 1803 / JCM 6124 / NCDO 523 / NBRC 100496 / NCIMB 8023 / NCTC 12954 / NRRL B-1118 / 37Y).